The chain runs to 108 residues: MRKYSVITYREDETVEGQPFIIATGKTYQAAAQIAREAMDNDPLVYGSTLRVERSPYEITVFDKQGEIAFVGEYPTYAQACDVSDYLKTTGLYSEIRISHPDGLGGEQ.

This is an uncharacterized protein from Pasteurella multocida (strain Pm70).